Here is a 635-residue protein sequence, read N- to C-terminus: UvrABC system protein C (635 aa).

Residues 1 to 14 (MAQNHMSETMNDIS) are compositionally biased toward polar residues. The segment at 1 to 27 (MAQNHMSETMNDISAESPDQPEPPRTG) is disordered. A GIY-YIG domain is found at 40 to 117 (SSPGVYRMLD…IKQLKPKYNV (78 aa)). The UVR domain occupies 227 to 262 (TKIQEELGAEMQAASEAMEYERAAALRDRIKALTQV).

The protein belongs to the UvrC family. In terms of assembly, interacts with UvrB in an incision complex.

It localises to the cytoplasm. Its function is as follows. The UvrABC repair system catalyzes the recognition and processing of DNA lesions. UvrC both incises the 5' and 3' sides of the lesion. The N-terminal half is responsible for the 3' incision and the C-terminal half is responsible for the 5' incision. The sequence is that of UvrABC system protein C from Ruegeria sp. (strain TM1040) (Silicibacter sp.).